The primary structure comprises 144 residues: Putative pre-16S rRNA nuclease (144 aa).

It belongs to the YqgF nuclease family.

It localises to the cytoplasm. Could be a nuclease involved in processing of the 5'-end of pre-16S rRNA. This chain is Putative pre-16S rRNA nuclease, found in Mycoplasma mobile (strain ATCC 43663 / 163K / NCTC 11711) (Mesomycoplasma mobile).